The chain runs to 418 residues: Glutamyl-tRNA reductase (418 aa).

Residues 49 to 52 (TCNR), S109, 114 to 116 (EPQ), and Q120 each bind substrate. The Nucleophile role is filled by C50. Residue 189–194 (GAGETI) participates in NADP(+) binding.

The protein belongs to the glutamyl-tRNA reductase family. In terms of assembly, homodimer.

It catalyses the reaction (S)-4-amino-5-oxopentanoate + tRNA(Glu) + NADP(+) = L-glutamyl-tRNA(Glu) + NADPH + H(+). The protein operates within porphyrin-containing compound metabolism; protoporphyrin-IX biosynthesis; 5-aminolevulinate from L-glutamyl-tRNA(Glu): step 1/2. Functionally, catalyzes the NADPH-dependent reduction of glutamyl-tRNA(Glu) to glutamate 1-semialdehyde (GSA). The chain is Glutamyl-tRNA reductase from Salmonella heidelberg (strain SL476).